The following is a 266-amino-acid chain: Putative carbamate hydrolase RutD (266 aa).

The protein belongs to the AB hydrolase superfamily. Hydrolase RutD family.

It carries out the reaction carbamate + 2 H(+) = NH4(+) + CO2. Its function is as follows. Involved in pyrimidine catabolism. May facilitate the hydrolysis of carbamate, a reaction that can also occur spontaneously. The sequence is that of Putative carbamate hydrolase RutD from Escherichia coli O150:H5 (strain SE15).